A 443-amino-acid polypeptide reads, in one-letter code: Citrate transporter CitP (443 aa).

The next 13 helical transmembrane spans lie at isoleucine 27–serine 47, isoleucine 59–phenylalanine 79, leucine 83–methionine 103, phenylalanine 114–phenylalanine 134, valine 151–glycine 171, alanine 177–leucine 197, serine 209–isoleucine 229, tyrosine 268–leucine 288, glycine 294–leucine 314, valine 322–glycine 342, valine 350–isoleucine 370, alanine 388–alanine 410, and methionine 422–methionine 442.

Belongs to the 2-hydroxycarboxylate transporter (2-HCT) (TC 2.A.24) family.

Its subcellular location is the cell membrane. The enzyme catalyses (R)-lactate(in) + citrate(out) = (R)-lactate(out) + citrate(in). The catalysed reaction is (S)-lactate(in) + citrate(out) = (S)-lactate(out) + citrate(in). It catalyses the reaction citrate(in) + H(+)(in) = citrate(out) + H(+)(out). Its activity is regulated as follows. Uptake of citrate is not affected by the absence or presence of Na(+) up to 25 mM and is increasingly inhibited by increasing Mg(2+) concentrations. Secondary transporter involved in citrate metabolism. During cometabolism of citrate and glucose, catalyzes the uptake of divalent citrate into the cell coupled to the exit of monovalent lactate, a product of citrate fermentation during citrate-glucose cometabolism (precursor/product exchange). The citrate/lactate exchange is electrogenic and results in the generation of a membrane potential. In the absence of glucose, i.e. when no lactate is produced, CitP catalyzes the proton-dependent transport of citrate and malate. Transports the divalent form of citrate and malate with the concomitant uptake of one proton, therefore translocating a single unit of negative charge across the membrane. In vitro, transports a range of substrates that contain the 2-hydroxycarboxylate motif, HO-CR(2)-COO(-), with a preference for malate, citrate and monovalent 2-hydroxyisobutyrate. Modification of the OH or the COO(-) groups of the 2-hydroxycarboxylate motif drastically reduces the affinity of the transporter for the substrates, indicating their relevance in substrate recognition. Significant activity is also observed with some 2-oxocarboxylates and a 3-hydroxycarboxylate. In Leuconostoc mesenteroides subsp. mesenteroides, this protein is Citrate transporter CitP.